A 130-amino-acid polypeptide reads, in one-letter code: Ribosome-binding factor A (130 aa).

It belongs to the RbfA family. Monomer. Binds 30S ribosomal subunits, but not 50S ribosomal subunits or 70S ribosomes.

It is found in the cytoplasm. One of several proteins that assist in the late maturation steps of the functional core of the 30S ribosomal subunit. Associates with free 30S ribosomal subunits (but not with 30S subunits that are part of 70S ribosomes or polysomes). Required for efficient processing of 16S rRNA. May interact with the 5'-terminal helix region of 16S rRNA. The protein is Ribosome-binding factor A of Roseiflexus sp. (strain RS-1).